The primary structure comprises 575 residues: Glycine--tRNA ligase (575 aa).

Substrate is bound by residues Arg96 and Glu162. Residues 194 to 196, 204 to 209, 327 to 328, and 450 to 453 each bind ATP; these read RNE, IRLREF, EC, and GIDR. Position 209 to 213 (209 to 213) interacts with substrate; sequence FTQAE. A substrate-binding site is contributed by 446–450; that stretch reads EPSYG.

It belongs to the class-II aminoacyl-tRNA synthetase family.

The protein resides in the cytoplasm. The enzyme catalyses tRNA(Gly) + glycine + ATP = glycyl-tRNA(Gly) + AMP + diphosphate. Functionally, catalyzes the attachment of glycine to tRNA(Gly). The polypeptide is Glycine--tRNA ligase (Methanococcus maripaludis (strain C5 / ATCC BAA-1333)).